Reading from the N-terminus, the 308-residue chain is MTTDSITFNHILGQGRVNQLGGVFINGRPLPIHVRHAIISMAKKGIKPCHISRQLKVSHGAVSKILNRYAETGSISPGQIGGSPRARLTVQAVEKEILIACDENPQMSAAELRDWLIHKDICTKGNAPTVPAIKRLIGNKGVGVPKKMERKRLSYSIDSILGISIDECSKSSSDDEEGSSPSNDASSRRNRTSFTAEQLDVLENAFRADTYPHANARESISKETGLSEEKIMTWFSNRRARCRKNMPMYQQYNVQGFGSSPPSYPTLLPSPMMFLPSYSTSPQLNPLFFQHILQSSPPSSQSSPPSSS.

Positions 13–140 (GQGRVNQLGG…PAIKRLIGNK (128 aa)) form a DNA-binding region, paired. The tract at residues 16-72 (RVNQLGGVFINGRPLPIHVRHAIISMAKKGIKPCHISRQLKVSHGAVSKILNRYAET) is PAI subdomain. The interval 92 to 140 (AVEKEILIACDENPQMSAAELRDWLIHKDICTKGNAPTVPAIKRLIGNK) is RED subdomain. The interval 168-191 (CSKSSSDDEEGSSPSNDASSRRNR) is disordered. A DNA-binding region (homeobox) is located at residues 187-246 (SRRNRTSFTAEQLDVLENAFRADTYPHANARESISKETGLSEEKIMTWFSNRRARCRKNM).

Belongs to the paired homeobox family.

The protein localises to the nucleus. Transcriptional activator. Regulates the lateral/ventral epidermal cell fate decision. The sequence is that of Paired box protein 3 homolog from Caenorhabditis elegans.